The sequence spans 924 residues: Autophagy-related protein 9B (924 aa).

The tract at residues 1–144 (MVSRMGWGGR…QDSPGLRVGP (144 aa)) is disordered. Topologically, residues 1 to 207 (MVSRMGWGGR…KIYSYHQRNG (207 aa)) are cytoplasmic. The span at 17–27 (WGDLGPGSVPL) shows a compositional bias: low complexity. Pro residues predominate over residues 28-40 (LPMPLPPPPPPSC). A compositionally biased stretch (polar residues) spans 78–88 (LQGTGASQSCH). The segment covering 98–113 (PTQAQPAMTPASASPS) has biased composition (low complexity). A Tyrosine-based sorting signal motif is present at residues 151–154 (YERL). The chain crosses the membrane as a helical span at residues 208–228 (FACILLEDVFQLGQFIFIVTF). Topologically, residues 229–276 (TTFLLRCVDYNVLFANQPSNHTRPGPFHSKVTLSDAILPSAQCAERIR) are lumenal. The chain crosses the membrane as a helical span at residues 277 to 297 (SSPLLVLLLVLAAGFWLVQLL). The Cytoplasmic portion of the chain corresponds to 298–438 (RSVCNLFSYW…GALAARWGRT (141 aa)). Residues 439 to 459 (VLLLAALNLALSPLVLAWQVL) lie within the membrane without spanning it. The Cytoplasmic portion of the chain corresponds to 460-526 (HVFYSHVELL…AAPPAPLRTL (67 aa)). The helical transmembrane segment at 527–547 (LARQLVFFAGALFAALLVLTV) threads the bilayer. Residues 548 to 551 (YDED) are Lumenal-facing. The chain crosses the membrane as a helical span at residues 552–572 (VLAVEHVLTAMTALGVTATVA). Residues 573–624 (RSFIPEEQCQGRAPQLLLQTALAHMHYLPEEPGPGGRDRAYRQMAQLLQYRA) lie on the Cytoplasmic side of the membrane. Residues 625 to 645 (VSLLEELLSPLLTPLFLLFWF) lie within the membrane without spanning it. Residues 646–924 (RPRALEIIDF…KEPDRASCTD (279 aa)) are Cytoplasmic-facing. Residues 847–924 (QQEPWGEAAA…KEPDRASCTD (78 aa)) are disordered. A compositionally biased stretch (low complexity) spans 878–890 (SWSSDGSSPASSP). Basic and acidic residues predominate over residues 913-924 (TQKEPDRASCTD).

The protein belongs to the ATG9 family. Homotrimer; forms a homotrimer with a central pore that forms a path between the two membrane leaflets. Highly expressed in placenta (trophoblast cells) and pituitary gland. Not expressed in vascular endothelial.

It is found in the preautophagosomal structure membrane. The enzyme catalyses a 1,2-diacyl-sn-glycero-3-phosphocholine(in) = a 1,2-diacyl-sn-glycero-3-phosphocholine(out). It carries out the reaction a 1,2-diacyl-sn-glycero-3-phospho-L-serine(in) = a 1,2-diacyl-sn-glycero-3-phospho-L-serine(out). The catalysed reaction is a 1,2-diacyl-sn-glycero-3-phosphoethanolamine(in) = a 1,2-diacyl-sn-glycero-3-phosphoethanolamine(out). Functionally, phospholipid scramblase involved in autophagy by mediating autophagosomal membrane expansion. Cycles between the preautophagosomal structure/phagophore assembly site (PAS) and the cytoplasmic vesicle pool and supplies membrane for the growing autophagosome. Lipid scramblase activity plays a key role in preautophagosomal structure/phagophore assembly by distributing the phospholipids that arrive through ATG2 (ATG2A or ATG2B) from the cytoplasmic to the luminal leaflet of the bilayer, thereby driving autophagosomal membrane expansion. In addition to autophagy, also plays a role in necrotic cell death. This is Autophagy-related protein 9B (ATG9B) from Homo sapiens (Human).